The chain runs to 319 residues: Probable secreted beta-glucosidase C2G2.17c (319 aa).

A signal peptide spans 1–19 (MLFNNFLCFAVSAIPLVSA). Residues N36, N39, N45, N48, and N221 are each glycosylated (N-linked (GlcNAc...) asparagine).

This sequence belongs to the SUN family.

It is found in the secreted. In terms of biological role, cell surface beta-glucosidase involved in cell wall biogenesis. This chain is Probable secreted beta-glucosidase C2G2.17c, found in Schizosaccharomyces pombe (strain 972 / ATCC 24843) (Fission yeast).